The sequence spans 111 residues: Nucleoid-associated protein CYA_1369 (111 aa).

Belongs to the YbaB/EbfC family. Homodimer.

The protein resides in the cytoplasm. It localises to the nucleoid. In terms of biological role, binds to DNA and alters its conformation. May be involved in regulation of gene expression, nucleoid organization and DNA protection. The chain is Nucleoid-associated protein CYA_1369 from Synechococcus sp. (strain JA-3-3Ab) (Cyanobacteria bacterium Yellowstone A-Prime).